A 665-amino-acid chain; its full sequence is Prelamin-A/C (665 aa).

Residue methionine 1 is modified to N-acetylmethionine. The disordered stretch occupies residues 1–27 (METPSQRRPTRSGAQASSTPLSPTRIT). The head stretch occupies residues 1–33 (METPSQRRPTRSGAQASSTPLSPTRITRLQEKE). An interaction with MLIP region spans residues 1–130 (METPSQRRPT…TKKEGDLLAA (130 aa)). Threonine 3 carries the post-translational modification Phosphothreonine. Residue serine 5 is modified to Phosphoserine. Threonine 10 carries the post-translational modification Phosphothreonine. 2 positions are modified to phosphoserine: serine 12 and serine 18. The residue at position 19 (threonine 19) is a Phosphothreonine. Serine 22 is subject to Phosphoserine. An IF rod domain is found at 31-387 (EKEDLQELND…KLLEGEEERL (357 aa)). The residue at position 32 (lysine 32) is an N6-acetyllysine; alternate. Residue lysine 32 is modified to N6-succinyllysine; alternate. Residue lysine 32 forms a Glycyl lysine isopeptide (Lys-Gly) (interchain with G-Cter in SUMO2); alternate linkage. Residues 34–70 (DLQELNDRLAVYIDRVRSLETENAGLRLRITESEEVV) form a coil 1A region. 3 positions are modified to phosphoserine: serine 51, serine 66, and serine 71. The linker 1 stretch occupies residues 71 to 80 (SREVSGIKAA). Residues lysine 78 and lysine 97 each carry the N6-acetyllysine modification. Residues 81 to 218 (YEAELGDARK…NIYSEELRET (138 aa)) are coil 1B. Lysine 97 participates in a covalent cross-link: Glycyl lysine isopeptide (Lys-Gly) (interchain with G-Cter in SUMO2). At serine 107 the chain carries Phosphoserine. Residues lysine 108, lysine 114, lysine 123, lysine 135, lysine 144, and lysine 155 each carry the N6-acetyllysine modification. Lysine 171 is modified (N6-acetyllysine; alternate). N6-succinyllysine; alternate is present on lysine 171. Residue lysine 171 forms a Glycyl lysine isopeptide (Lys-Gly) (interchain with G-Cter in SUMO2); alternate linkage. 3 positions are modified to N6-acetyllysine: lysine 180, lysine 201, and lysine 208. Residue lysine 201 forms a Glycyl lysine isopeptide (Lys-Gly) (interchain with G-Cter in SUMO2); alternate linkage. A Glycyl lysine isopeptide (Lys-Gly) (interchain with G-Cter in SUMO); alternate cross-link involves residue lysine 201. A Glycyl lysine isopeptide (Lys-Gly) (interchain with G-Cter in SUMO2) cross-link involves residue lysine 208. The residue at position 212 (serine 212) is a Phosphoserine. Residues lysine 219 and lysine 233 each participate in a glycyl lysine isopeptide (Lys-Gly) (interchain with G-Cter in SUMO2) cross-link. The tract at residues 219-242 (KRRHETRLVEIDNGKQREFESRLA) is linker 2. Residues lysine 233, lysine 260, lysine 265, and lysine 270 each carry the N6-acetyllysine modification. Residues 243–383 (DALQELRAQH…HAYRKLLEGE (141 aa)) are coil 2. Lysine 260 participates in a covalent cross-link: Glycyl lysine isopeptide (Lys-Gly) (interchain with G-Cter in SUMO2); alternate. A Glycyl lysine isopeptide (Lys-Gly) (interchain with G-Cter in SUMO2); alternate cross-link involves residue lysine 270. Residues serine 277, serine 282, serine 301, and serine 307 each carry the phosphoserine modification. Lysine 311 is covalently cross-linked (Glycyl lysine isopeptide (Lys-Gly) (interchain with G-Cter in SUMO2); alternate). N6-acetyllysine is present on residues lysine 311, lysine 316, and lysine 341. Glycyl lysine isopeptide (Lys-Gly) (interchain with G-Cter in SUMO2) cross-links involve residues lysine 366 and lysine 378. The segment at 384 to 442 (EERLRLSPSPTSQRSRGRASSHSSQSQGGGSVTKKRKLESSESRSSFSQHARTSGRVAV) is disordered. Positions 384–665 (EERLRLSPSP…TQSSQNCSIM (282 aa)) are tail. Residues serine 390, serine 392, serine 395, serine 398, serine 403, serine 404, serine 406, serine 407, serine 409, and serine 414 each carry the phosphoserine modification. The segment covering 395-409 (SQRSRGRASSHSSQS) has biased composition (low complexity). Position 416 is a phosphothreonine (threonine 416). An N6-acetyllysine modification is found at lysine 417. Glycyl lysine isopeptide (Lys-Gly) (interchain with G-Cter in SUMO2) cross-links involve residues lysine 417 and lysine 420. A Nuclear localization signal motif is present at residues 417–422 (KKRKLE). Phosphoserine is present on residues serine 423, serine 426, serine 429, and serine 431. The LTD domain occupies 428-545 (SSFSQHARTS…EEVAMRKLVR (118 aa)). Lysine 450 participates in a covalent cross-link: Glycyl lysine isopeptide (Lys-Gly) (interchain with G-Cter in SUMO2); alternate. An N6-acetyllysine mark is found at lysine 450 and lysine 457. Serine 458 and serine 463 each carry phosphoserine. Glycyl lysine isopeptide (Lys-Gly) (interchain with G-Cter in SUMO2) cross-links involve residues lysine 470 and lysine 486. Lysine 486 is modified (N6-acetyllysine). Threonine 496 bears the Phosphothreonine mark. Residue serine 500 is modified to Phosphoserine. Residues threonine 505 and threonine 510 each carry the phosphothreonine modification. A Phosphoserine modification is found at serine 546. Threonine 548 is subject to Phosphothreonine. Acidic residues predominate over residues 552 to 561 (DNDDEEEDGD). Positions 552–577 (DNDDEEEDGDELLHHHRGSHCSSSGD) are disordered. Phosphoserine occurs at positions 570 and 573. Lysine 599 is covalently cross-linked (Glycyl lysine isopeptide (Lys-Gly) (interchain with G-Cter in SUMO2); alternate). Residue lysine 599 forms a Glycyl lysine isopeptide (Lys-Gly) (interchain with G-Cter in SUMO1); alternate linkage. A phosphoserine mark is found at serine 613, serine 614, serine 617, and serine 620. 2 O-linked (GlcNAc) serine glycosylation sites follow: serine 626 and serine 629. A phosphoserine mark is found at serine 629, serine 633, serine 637, and serine 653. A propeptide spans 648-662 (LLGNSSPRTQSSQNC) (removed in Lamin-A/C form). Residue cysteine 662 is modified to Cysteine methyl ester. The S-farnesyl cysteine moiety is linked to residue cysteine 662. A propeptide spans 663–665 (SIM) (removed in Prelamin-A/C form and in Lamin-A/C form).

The protein belongs to the intermediate filament family. In terms of assembly, homodimer of lamin A and lamin C. Lamin dimers then assemble into dimeric head-to-tail polymers. Ultimately, two head-to-tail polymers assemble laterally into a protofilament with a uniformly shaped rod of 3.5 nm in diameter. Interacts with lamin-associated polypeptides IA, IB and TMPO-alpha, RB1 and with emerin. Interacts with SREBF1, SREBF2, SUN2 and TMEM43. Interacts with TMEM201. Proteolytically processed isoform A interacts with NARF. Interacts with SUN1. Interacts with MLIP. Interacts with DMPK; may regulate nuclear envelope stability. Interacts with SUV39H1; the interaction increases stability of SUV39H1. Interacts with SYNE2. Interacts with ITSN1 isoform 2. Interacts with IFFO1; enables the formation of an interior nucleoskeleton that is recruited to DNA double-strand breaks. Interacts with EMD. As to quaternary structure, interacts (via C-terminus) with LEMD2 (via N-terminus) (in vitro). Post-translationally, proteolytic cleavage of the C-terminal of 18 residues of prelamin-A/C results in the production of lamin-A/C. The prelamin-A/C maturation pathway includes farnesylation of CAAX motif by protein farnesyltransferase (FNTA and FNTB), removal of the last three amino acids (-AAX) by RCE1/FACE2 and/or ZMPSTE24, methylation of the C-terminal cysteine by ICMT and endoproteolytic removal of the last 15 C-terminal amino acids by ZMPSTE24. Proteolytic cleavage requires prior farnesylation and methylation, and absence of these blocks cleavage. In terms of processing, farnesylation of prelamin-A/C facilitates nuclear envelope targeting. Phosphorylation plays a key role in lamin organization, subcellular localization and nuclear envelope disintegration. Phosphorylation by CDK1 at Ser-22 and Ser-392 at the onset of mitosis drives lamin disassembly and nuclear envelope breakdown. Phosphorylation at Ser-22 and Ser-392 during interphase promotes localization to the nucleoplasm and regulates lamina assembly. Phosphorylation at Ser-22, Ser-392 and Ser-629 during interphase causes redistribution between the nucleus and the cytoplasm. Phosphorylation at Ser-22 by CDK1 regulates matrix stiffness. Phosphorylation status of Ser-22 determines its localization between double-strand break (DSB) sites and the nuclear matrix. Phosphorylated by ATR at Ser-282 in response to DNA damage, leading to lamin disassembly and nuclear envelope rupture. Phosphorylation also regulates stability in micronuclei arising from genome instability: phosphorylation at Ser-395 by ATR in response to genome instability and double-stranded DNA breaks primes LMNA for subsequent phosphorylation at Ser-392 by CDK1 and micronuclei envelope rupture. The rupture of micronuclear envelope triggers the cGAS-STING pathway thereby activating the type I interferon response and innate immunity. Post-translationally, acetylation by KAT8 is required for nuclear architecture. In terms of processing, sumoylation is necessary for the localization to the nuclear envelope.

Its subcellular location is the nucleus lamina. The protein resides in the nucleus envelope. It is found in the nucleus. It localises to the nucleoplasm. The protein localises to the nucleus matrix. Lamins are intermediate filament proteins that assemble into a filamentous meshwork, and which constitute the major components of the nuclear lamina, a fibrous layer on the nucleoplasmic side of the inner nuclear membrane. Lamins provide a framework for the nuclear envelope, bridging the nuclear envelope and chromatin, thereby playing an important role in nuclear assembly, chromatin organization, nuclear membrane and telomere dynamics. Lamin A and C also regulate matrix stiffness by conferring nuclear mechanical properties. The structural integrity of the lamina is strictly controlled by the cell cycle, as seen by the disintegration and formation of the nuclear envelope in prophase and telophase, respectively. Lamin A and C are present in equal amounts in the lamina of mammals. Also invoved in DNA repair: recruited by DNA repair proteins XRCC4 and IFFO1 to the DNA double-strand breaks (DSBs) to prevent chromosome translocation by immobilizing broken DNA ends. Required for normal development of peripheral nervous system and skeletal muscle and for muscle satellite cell proliferation. Required for osteoblastogenesis and bone formation. Also prevents fat infiltration of muscle and bone marrow, helping to maintain the volume and strength of skeletal muscle and bone. Required for cardiac homeostasis. Its function is as follows. Prelamin-A/C can accelerate smooth muscle cell senescence. It acts to disrupt mitosis and induce DNA damage in vascular smooth muscle cells (VSMCs), leading to mitotic failure, genomic instability, and premature senescence. The chain is Prelamin-A/C (Lmna) from Rattus norvegicus (Rat).